A 439-amino-acid polypeptide reads, in one-letter code: Proline--tRNA ligase (439 aa).

It belongs to the class-II aminoacyl-tRNA synthetase family. ProS type 2 subfamily. Homodimer.

The protein resides in the cytoplasm. The catalysed reaction is tRNA(Pro) + L-proline + ATP = L-prolyl-tRNA(Pro) + AMP + diphosphate. Catalyzes the attachment of proline to tRNA(Pro) in a two-step reaction: proline is first activated by ATP to form Pro-AMP and then transferred to the acceptor end of tRNA(Pro). This Nitrobacter winogradskyi (strain ATCC 25391 / DSM 10237 / CIP 104748 / NCIMB 11846 / Nb-255) protein is Proline--tRNA ligase.